A 176-amino-acid polypeptide reads, in one-letter code: Nucleoside triphosphate/diphosphate phosphatase (176 aa).

Arg23 functions as the Proton donor in the catalytic mechanism. Mg(2+)-binding residues include Asn87, Asp103, Asp105, Asp107, Asp120, and Glu123.

It belongs to the Ntdp family. Mg(2+) is required as a cofactor.

It carries out the reaction a ribonucleoside 5'-triphosphate + H2O = a ribonucleoside 5'-diphosphate + phosphate + H(+). The catalysed reaction is a ribonucleoside 5'-diphosphate + H2O = a ribonucleoside 5'-phosphate + phosphate + H(+). Its function is as follows. Has nucleoside phosphatase activity towards nucleoside triphosphates and nucleoside diphosphates. The protein is Nucleoside triphosphate/diphosphate phosphatase of Bacillus cereus (strain AH820).